Here is a 183-residue protein sequence, read N- to C-terminus: Pyruvoyl-dependent arginine decarboxylase 2 (183 aa).

Position 41 is a pyruvic acid (Ser) (S41).

The protein belongs to the PdaD family. It depends on pyruvate as a cofactor.

It catalyses the reaction L-arginine + H(+) = agmatine + CO2. This chain is Pyruvoyl-dependent arginine decarboxylase 2 (pdaD2), found in Methanosarcina mazei (strain ATCC BAA-159 / DSM 3647 / Goe1 / Go1 / JCM 11833 / OCM 88) (Methanosarcina frisia).